A 379-amino-acid chain; its full sequence is Pre-mRNA-processing protein 45 (379 aa).

The segment covering 1–10 (MFSNRLPPPK) has biased composition (pro residues). Disordered stretches follow at residues 1–22 (MFSN…ALSS) and 353–379 (SEGA…NYGA). Over residues 368–379 (AESDDKSDNYGA) the composition is skewed to basic and acidic residues.

It belongs to the SNW family. As to quaternary structure, belongs to the CWC complex (or CEF1-associated complex), a spliceosome sub-complex reminiscent of a late-stage spliceosome composed of the U2, U5 and U6 snRNAs and at least BUD13, BUD31, BRR2, CDC40, CEF1, CLF1, CUS1, CWC2, CWC15, CWC21, CWC22, CWC23, CWC24, CWC25, CWC27, ECM2, HSH155, IST3, ISY1, LEA1, MSL1, NTC20, PRP8, PRP9, PRP11, PRP19, PRP21, PRP22, PRP45, PRP46, SLU7, SMB1, SMD1, SMD2, SMD3, SMX2, SMX3, SNT309, SNU114, SPP2, SYF1, SYF2, RSE1 and YJU2. Interacts with CLF1, PRP22 and PRP46. Interacts with SPP382.

The protein resides in the nucleus. In terms of biological role, involved in pre-mRNA splicing. Associated with the spliceosome throughout the splicing reactions, until after the second catalytic step. The polypeptide is Pre-mRNA-processing protein 45 (PRP45) (Saccharomyces cerevisiae (strain ATCC 204508 / S288c) (Baker's yeast)).